Consider the following 148-residue polypeptide: Leghemoglobin-1 (148 aa).

A Globin domain is found at 2–146 (GFTDKQEALV…LATAIKKAMK (145 aa)). Nitrated tyrosine is present on residues tyrosine 24 and tyrosine 29. Serine 44 is a heme b binding site. Residue serine 44 is modified to Phosphoserine. Residue histidine 61 participates in O2 binding. Heme b-binding residues include histidine 93 and lysine 96. Nitrated tyrosine is present on tyrosine 134.

This sequence belongs to the plant globin family. As to quaternary structure, monomer. In terms of processing, nitrated in effective nodules and particularly in hypoxic conditions; this mechanism may play a protective role in the symbiosis by buffering toxic peroxynitrite NO(2)(-). Nitration level decrease during nodule senescence. Phosphorylation at Ser-44 disrupts the molecular environment of its porphyrin ring oxygen binding pocket, thus leading to a reduced oxygen consumption and to the delivery of oxygen O(2) to symbiosomes. As to expression, root nodules.

Its subcellular location is the cytoplasm. It localises to the cytosol. The protein localises to the nucleus. Its function is as follows. Leghemoglobin that reversibly binds oxygen O(2) through a pentacoordinated heme iron. In root nodules, facilitates the diffusion of oxygen to the bacteroids while preventing the bacterial nitrogenase from being inactivated by buffering dioxygen, nitric oxide and carbon monoxide, and promoting the formation of reactive oxygen species (ROS, e.g. H(2)O(2)). This role is essential for symbiotic nitrogen fixation (SNF). This chain is Leghemoglobin-1, found in Pisum sativum (Garden pea).